The primary structure comprises 430 residues: Enolase (430 aa).

Glutamine 162 contacts (2R)-2-phosphoglycerate. Glutamate 204 (proton donor) is an active-site residue. The Mg(2+) site is built by aspartate 241, glutamate 283, and aspartate 310. Residues lysine 335, arginine 364, serine 365, and lysine 386 each coordinate (2R)-2-phosphoglycerate. Lysine 335 (proton acceptor) is an active-site residue.

It belongs to the enolase family. It depends on Mg(2+) as a cofactor.

It is found in the cytoplasm. Its subcellular location is the secreted. The protein resides in the cell surface. The enzyme catalyses (2R)-2-phosphoglycerate = phosphoenolpyruvate + H2O. The protein operates within carbohydrate degradation; glycolysis; pyruvate from D-glyceraldehyde 3-phosphate: step 4/5. Catalyzes the reversible conversion of 2-phosphoglycerate (2-PG) into phosphoenolpyruvate (PEP). It is essential for the degradation of carbohydrates via glycolysis. The sequence is that of Enolase from Mycobacteroides abscessus (strain ATCC 19977 / DSM 44196 / CCUG 20993 / CIP 104536 / JCM 13569 / NCTC 13031 / TMC 1543 / L948) (Mycobacterium abscessus).